Reading from the N-terminus, the 707-residue chain is Polyribonucleotide nucleotidyltransferase (707 aa).

2 residues coordinate Mg(2+): Asp-486 and Asp-492. Positions 553–612 (PRIHTIKINPEKIKDVIGKGGSVIRALTEETGTTIEIEDDGTVKIAATDGDKAKHAIRRI) constitute a KH domain. One can recognise an S1 motif domain in the interval 622-690 (GRIYQGKVTR…RQGRVRLSIK (69 aa)).

It belongs to the polyribonucleotide nucleotidyltransferase family. In terms of assembly, component of the RNA degradosome, which is a multiprotein complex involved in RNA processing and mRNA degradation. It depends on Mg(2+) as a cofactor.

The protein localises to the cytoplasm. It catalyses the reaction RNA(n+1) + phosphate = RNA(n) + a ribonucleoside 5'-diphosphate. Involved in mRNA degradation. Catalyzes the phosphorolysis of single-stranded polyribonucleotides processively in the 3'- to 5'-direction. The polypeptide is Polyribonucleotide nucleotidyltransferase (Edwardsiella ictaluri (strain 93-146)).